Here is a 501-residue protein sequence, read N- to C-terminus: Dihydrolipoyl dehydrogenase, mitochondrial (501 aa).

Residues 1-31 constitute a mitochondrion transit peptide; sequence MAMANLARRKGYSLLSSETLRYSFSLRSRAF. Residues 67–76, K85, G149, and 178–180 contribute to the FAD site; these read EKRGALGGTC and TGS. C76 and C81 are oxidised to a cystine. NAD(+) contacts are provided by residues 215–222, E238, V272, and G307; that span reads GAGYIGLE. Residues D348 and 354–357 each bind FAD; that span reads MLAH. H480 serves as the catalytic Proton acceptor.

The protein belongs to the class-I pyridine nucleotide-disulfide oxidoreductase family. As to quaternary structure, homodimer. FAD serves as cofactor.

It localises to the mitochondrion matrix. The catalysed reaction is N(6)-[(R)-dihydrolipoyl]-L-lysyl-[protein] + NAD(+) = N(6)-[(R)-lipoyl]-L-lysyl-[protein] + NADH + H(+). In terms of biological role, lipoamide dehydrogenase is a component of the glycine cleavage system as well as of the alpha-ketoacid dehydrogenase complexes. The pyruvate dehydrogenase complex contains multiple copies of three enzymatic components: pyruvate dehydrogenase (E1), dihydrolipoamide acetyltransferase (E2) and lipoamide dehydrogenase (E3). The polypeptide is Dihydrolipoyl dehydrogenase, mitochondrial (LPD) (Pisum sativum (Garden pea)).